The following is a 490-amino-acid chain: Tegument protein VP16 (490 aa).

Positions 12 to 35 (MNADGASPPPPRPAGGPKNTPAAP) are disordered. Phosphoserine is present on residues Ser-18, Ser-353, Ser-411, and Ser-452. The transcriptional activation stretch occupies residues 411–490 (STAPPTDVSL…DALGIDEYGG (80 aa)).

It belongs to the herpesviridae tegument protein VP16 protein family. As to quaternary structure, interacts with tegument protein VP22. Interacts with gH (via C-terminus). Interacts with the virion host shutoff protein (vhs). Interacts with VP11/12. Associates with the VP16-induced complex; binding to host HCFC1 activates VP16 for association with the octamer motif-binding host protein POU2F1, to form a multiprotein-DNA complex responsible for activating transcription of the viral immediate early genes. Interacts with host P-TEFb; this interaction recruits P-TEFb to the viral alpha-gene promoters and overcomes transcriptional inhibition by ICP22 and promotes transcription of IE genes.

It is found in the virion tegument. The protein resides in the host nucleus. In the early stage of viral replication, acts as a transcriptional activator of immediate-early (IE) gene products (alpha-genes), which is released by invading virions. Recruits P-TEFb to the viral alpha-gene promoters and overcomes transcriptional inhibition by ICP22 to promote transcription of IE genes. VP16-induced complex represents a regulatory switch: when it is on, it promotes IE-gene expression and thus lytic infection, and when it is off, it limits IE-gene transcription favoring latent infection. Acts as a key activator of lytic infection by initiating the lytic program through the assembly of the transcriptional regulatory VP16-induced complex composed of VP16 and two cellular factors, HCFC1 and POU2F1. This complex recognizes the core motif 'TAATGARAT' in alpha-gene promoters. In the late stage of viral replication, VP16, as a tegument, is involved in viral assembly. In terms of biological role, may play a role in the aggregation of tegument proteins around nucleocapsids during virus morphogenesis. This is Tegument protein VP16 from Human herpesvirus 1 (strain 17) (HHV-1).